Reading from the N-terminus, the 1233-residue chain is ATP-dependent helicase/nuclease subunit A (1233 aa).

In terms of domain architecture, UvrD-like helicase ATP-binding spans 3–474 (TKWTEEQKQA…ILLYKNFRSR (472 aa)). 24–31 (AAAGSGKT) contacts ATP. Residues 518 to 809 (VTGGAVELHL…RIMSIHKSKG (292 aa)) enclose the UvrD-like helicase C-terminal domain. The interval 533–555 (VEEEVEEKEEEKNEEKDFEEEEE) is disordered.

Belongs to the helicase family. AddA subfamily. As to quaternary structure, heterodimer of AddA and AddB/RexB. Requires Mg(2+) as cofactor.

The enzyme catalyses Couples ATP hydrolysis with the unwinding of duplex DNA by translocating in the 3'-5' direction.. It carries out the reaction ATP + H2O = ADP + phosphate + H(+). Functionally, the heterodimer acts as both an ATP-dependent DNA helicase and an ATP-dependent, dual-direction single-stranded exonuclease. Recognizes the chi site generating a DNA molecule suitable for the initiation of homologous recombination. The AddA nuclease domain is required for chi fragment generation; this subunit has the helicase and 3' -&gt; 5' nuclease activities. The polypeptide is ATP-dependent helicase/nuclease subunit A (Thermoanaerobacter pseudethanolicus (strain ATCC 33223 / 39E) (Clostridium thermohydrosulfuricum)).